Consider the following 286-residue polypeptide: Aspartate-semialdehyde dehydrogenase (286 aa).

Residues 10–13 (RGMV), 37–38 (TS), and Gln-74 contribute to the NADP(+) site. Residue Arg-103 coordinates phosphate. Cys-136 acts as the Acyl-thioester intermediate in catalysis. Gln-163 provides a ligand contact to substrate. NADP(+)-binding positions include 166–167 (SG) and Pro-194. Residue Glu-242 participates in substrate binding. Lys-245 contributes to the phosphate binding site. Arg-269 serves as a coordination point for substrate. His-276 acts as the Proton acceptor in catalysis.

The protein belongs to the aspartate-semialdehyde dehydrogenase family. In terms of assembly, homodimer.

The catalysed reaction is L-aspartate 4-semialdehyde + phosphate + NADP(+) = 4-phospho-L-aspartate + NADPH + H(+). The protein operates within amino-acid biosynthesis; L-lysine biosynthesis via DAP pathway; (S)-tetrahydrodipicolinate from L-aspartate: step 2/4. It functions in the pathway amino-acid biosynthesis; L-methionine biosynthesis via de novo pathway; L-homoserine from L-aspartate: step 2/3. It participates in amino-acid biosynthesis; L-threonine biosynthesis; L-threonine from L-aspartate: step 2/5. Catalyzes the NADPH-dependent formation of L-aspartate-semialdehyde (L-ASA) by the reductive dephosphorylation of L-aspartyl-4-phosphate. This chain is Aspartate-semialdehyde dehydrogenase (asd), found in Actinobacillus pleuropneumoniae (Haemophilus pleuropneumoniae).